A 368-amino-acid chain; its full sequence is Protein L-Myc (368 aa).

Disordered regions lie at residues 39–79 (PPTS…RGHS), 112–179 (RLAP…EKRR), and 218–295 (FPPE…FLER). The span at 135-147 (LEASNPAPATQCQ) shows a compositional bias: polar residues. Positions 247–258 (EEEEEEEEEEEI) are enriched in acidic residues. A compositionally biased stretch (basic and acidic residues) spans 283–294 (DVTKRKNHNFLE). One can recognise a bHLH domain in the interval 285–337 (TKRKNHNFLERKRRNDLRSRFLALRDQVPTLASCSKAPKVVILSKALEYLQAL). The tract at residues 337–365 (LVGAEKKMATEKRQLRCRQQQLQKRIAYL) is leucine-zipper.

In terms of assembly, efficient DNA binding requires dimerization with another bHLH protein. Binds DNA as a heterodimer with MAX.

The protein resides in the nucleus. This Mus musculus (Mouse) protein is Protein L-Myc (Mycl).